A 483-amino-acid polypeptide reads, in one-letter code: Pre-glycoprotein polyprotein GP complex (483 aa).

G2 carries the N-myristoyl glycine; by host lipid modification. Residues G2–E17 are Extracellular-facing. Residues A18–V32 form a helical membrane-spanning segment. A topological domain (cytoplasmic) is located at residue K33. The chain crosses the membrane as a helical span at residues G34–A53. Extracellular segments follow at residues G54 to S58 and E59 to D422. C57 contacts Zn(2+). N-linked (GlcNAc...) asparagine; by host glycans are attached at residues N83 and N95. Disulfide bonds link C92–C224, C134–C162, C205–C211, C269–C282, C291–C300, and C354–C375. N164 and N176 each carry an N-linked (GlcNAc...) asparagine; by host glycan. N-linked (GlcNAc...) asparagine; by host glycans are attached at residues N355, N363, N380, and N385. Residues I423–P443 traverse the membrane as a helical segment. The Cytoplasmic portion of the chain corresponds to T444–H483. 7 residues coordinate Zn(2+): H445, H447, C453, H457, C465, C467, and H483.

The protein belongs to the arenaviridae GPC protein family. Homotetramer; disulfide-linked. In terms of assembly, homotetramer. GP2 homotetramers bind through ionic interactions with GP1 homotetramers to form the GP complex together with the stable signal peptide. The GP-C polyprotein interacts with the host protease MBTPS1/SKI-1 resulting in the polyprotein processing. Specific enzymatic cleavages in vivo yield mature proteins. GP-C polyprotein is cleaved in the endoplasmic reticulum by the host protease MBTPS1. Only cleaved glycoprotein is incorporated into virions. In terms of processing, the SSP remains stably associated with the GP complex following cleavage by signal peptidase and plays crucial roles in the trafficking of GP through the secretory pathway. Post-translationally, myristoylation is necessary for GP2-mediated fusion activity.

It is found in the virion membrane. Its subcellular location is the host endoplasmic reticulum membrane. The protein localises to the host Golgi apparatus membrane. It localises to the host cell membrane. Functionally, class I viral fusion protein that directs fusion of viral and host endosomal membranes, leading to delivery of the nucleocapsid into the cytoplasm. Membrane fusion is mediated by irreversible conformational changes induced upon acidification in the endosome. Stable signal peptide (SSP): cleaved and functions as a signal peptide. In addition, it is also retained as the third component of the GP complex. The SSP is required for efficient glycoprotein expression, post-translational maturation cleavage of GP1 and GP2, glycoprotein transport to the cell surface plasma membrane, formation of infectious virus particles, and acid pH-dependent glycoprotein-mediated cell fusion. Its function is as follows. Interacts with the host receptor. The sequence is that of Pre-glycoprotein polyprotein GP complex from Tacaribe virus (strain V5) (TCRV).